A 302-amino-acid chain; its full sequence is Nucleotide-binding protein SE_0548 (302 aa).

18-25 contributes to the ATP binding site; that stretch reads GMSGAGKS. GTP is bound at residue 69 to 72; the sequence is DLRG.

Belongs to the RapZ-like family.

Functionally, displays ATPase and GTPase activities. The protein is Nucleotide-binding protein SE_0548 of Staphylococcus epidermidis (strain ATCC 12228 / FDA PCI 1200).